We begin with the raw amino-acid sequence, 153 residues long: UPF0260 protein Plav_0898 (153 aa).

The protein belongs to the UPF0260 family.

This chain is UPF0260 protein Plav_0898, found in Parvibaculum lavamentivorans (strain DS-1 / DSM 13023 / NCIMB 13966).